The following is a 164-amino-acid chain: Large ribosomal subunit protein uL10 (164 aa).

The protein belongs to the universal ribosomal protein uL10 family. As to quaternary structure, part of the ribosomal stalk of the 50S ribosomal subunit. The N-terminus interacts with L11 and the large rRNA to form the base of the stalk. The C-terminus forms an elongated spine to which L12 dimers bind in a sequential fashion forming a multimeric L10(L12)X complex.

In terms of biological role, forms part of the ribosomal stalk, playing a central role in the interaction of the ribosome with GTP-bound translation factors. This chain is Large ribosomal subunit protein uL10, found in Aliivibrio salmonicida (strain LFI1238) (Vibrio salmonicida (strain LFI1238)).